The sequence spans 1783 residues: Trans-splicing factor Raa3, chloroplastic (1783 aa).

Residues 1–40 (MKADLATAKGSSPAFSAPRTYRARLLSRCLNKCFNTVLVS) constitute a chloroplast transit peptide. 8 disordered regions span residues 97 to 378 (ATTH…VGVN), 420 to 484 (ATSA…VAAQ), 563 to 610 (ARVG…SATK), 652 to 709 (STEP…SPAA), 918 to 971 (AAPT…QRAS), 1395 to 1427 (RDAKRHVRQSAAAAAAAAAAAQDQRQEQHQQHQ), 1476 to 1506 (PAPAHMQQQPQSSGTGCQKSRRRRMRYRRSR), and 1620 to 1639 (VKGRGRGRRTAARATTDVQG). Residues 105–118 (DSGGQGPAAAGGRG) are compositionally biased toward gly residues. 3 stretches are compositionally biased toward low complexity: residues 126 to 157 (QAAASAATTVSAAPQTGATKPAATAKTTPQRP), 186 to 205 (AVDAASDAAPDVAAASPAPA), and 224 to 242 (AGKPRASGRAPAAPGVGPQ). A compositionally biased stretch (basic and acidic residues) spans 256–273 (DESHMGLTHRDQGHDERI). Residues 277–289 (AGEAWKAGAVAAP) are compositionally biased toward low complexity. Over residues 307–316 (LASSALGTHS) the composition is skewed to polar residues. Low complexity-rich tracts occupy residues 343-374 (SGSSSSSSGRNSSSNSNTSTSSTSNGVTITSN), 420-436 (ATSAASSSTSSASSSSS), 577-599 (RPVQGQSGQVPQVGQGPVQSQPG), 655-669 (PLAASAPTTSLASAS), 676-709 (SSSNAHSSAAASEAAAGTVRAPTDTAAPAASPAA), 928-970 (SAAA…PQRA), and 1403-1417 (QSAAAAAAAAAAAQD). Basic residues-rich tracts occupy residues 1494-1506 (KSRRRRMRYRRSR) and 1620-1630 (VKGRGRGRRTA). In terms of domain architecture, RAP spans 1713-1772 (LAVGAAAGGAVIRNSRWLLSGAGALRRRLLTHAGWLVVPVRERQWKDLRSAEQQRRVVRE).

In terms of assembly, part of a 1700 kDa complex that includes the precursor RNA to exon 1 and the tscA RNA.

It is found in the plastid. The protein localises to the chloroplast stroma. Required for trans-splicing of exons 1 and 2 of the chloroplast encoded psaA mRNA (a group II intron). May be required for stability of the chloroplast RNA-protein complex in which it is found. The chain is Trans-splicing factor Raa3, chloroplastic (RAA3) from Chlamydomonas reinhardtii (Chlamydomonas smithii).